A 123-amino-acid polypeptide reads, in one-letter code: Large ribosomal subunit protein bL12 (123 aa).

It belongs to the bacterial ribosomal protein bL12 family. In terms of assembly, homodimer. Part of the ribosomal stalk of the 50S ribosomal subunit. Forms a multimeric L10(L12)X complex, where L10 forms an elongated spine to which 2 to 4 L12 dimers bind in a sequential fashion. Binds GTP-bound translation factors.

Functionally, forms part of the ribosomal stalk which helps the ribosome interact with GTP-bound translation factors. Is thus essential for accurate translation. The sequence is that of Large ribosomal subunit protein bL12 from Finegoldia magna (strain ATCC 29328 / DSM 20472 / WAL 2508) (Peptostreptococcus magnus).